The following is a 155-amino-acid chain: Ribosomal RNA large subunit methyltransferase H (155 aa).

Residues Leu-72, Gly-103, and 122–127 (LSPLTL) each bind S-adenosyl-L-methionine.

It belongs to the RNA methyltransferase RlmH family. In terms of assembly, homodimer.

The protein localises to the cytoplasm. It catalyses the reaction pseudouridine(1915) in 23S rRNA + S-adenosyl-L-methionine = N(3)-methylpseudouridine(1915) in 23S rRNA + S-adenosyl-L-homocysteine + H(+). Functionally, specifically methylates the pseudouridine at position 1915 (m3Psi1915) in 23S rRNA. In Haemophilus influenzae (strain PittGG), this protein is Ribosomal RNA large subunit methyltransferase H.